We begin with the raw amino-acid sequence, 261 residues long: Phosphonates import ATP-binding protein PhnC (261 aa).

The region spanning 8-253 (LRVENLSKTY…WFRRIYGEGA (246 aa)) is the ABC transporter domain. ATP is bound at residue 41–48 (GLSGSGKS).

This sequence belongs to the ABC transporter superfamily. Phosphonates importer (TC 3.A.1.9.1) family. In terms of assembly, the complex is composed of two ATP-binding proteins (PhnC), two transmembrane proteins (PhnE) and a solute-binding protein (PhnD).

The protein localises to the cell inner membrane. It carries out the reaction phosphonate(out) + ATP + H2O = phosphonate(in) + ADP + phosphate + H(+). In terms of biological role, part of the ABC transporter complex PhnCDE involved in phosphonates import. Responsible for energy coupling to the transport system. This chain is Phosphonates import ATP-binding protein PhnC, found in Bdellovibrio bacteriovorus (strain ATCC 15356 / DSM 50701 / NCIMB 9529 / HD100).